Reading from the N-terminus, the 692-residue chain is MLHSQIKSDIKQCYENLGNQLDNFIPRRAQNYLVAEIAKTLAGEYHQKHRMLVGEAGTGIGKSLAYLLGGIPFALFNNKKLLISTATVALQEQLINKDLPLFNRIYPKEFSFILAKGRQRYCCNHKLEACCATNNDQQVTLWEEKPKKSDLDLLRRMLKATRDGKWDGDRDSWPTTIPDRVWPQIMADKHSCHAGLPQHRSCPFAKAREHLDKADVIIANHALLMADIELGGGVILPEPEQTIYVIDEAHHLPKVARDFSSAASSLKGAATWLEKLNQTIGKLAELAEYKKAARFQDAILENIQHLIPTLRQVANNVDVGMFSKDGIYRFEHGELPAWLEQEAKGCKDASKKALQSLGKIHDLISERLKDNEIQQRLGEQALAESGVYLQRLENLEKVWALMAQPKKDKGAPLARWIEKNPDNEGDYIIQVSPLEVGYRLDQLLWSRAAGAILVSATLRALNQFTYFCRQVGIYEMDSTRFLALASPFDYQNNARLVIPALSLEPQADKFTDLLIKTLPEYLEGETASLVLFSSYWQMNKVADELRPLAKKNKWELLVQGEESRHITLKKHKDNCKSGKPSILFGTGSFSEGLDLPGDLLKNLIITKIPFGVPTSPVEEAHAEYIESCGGNPFMQISVPEASKKLIQSVGRLIRKEDDMGRVVLLDRRIINRRYGKALLDSLPPFKRVIEYS.

Residues 16-293 (NLGNQLDNFI…AELAEYKKAA (278 aa)) enclose the Helicase ATP-binding domain. 56-63 (AGTGIGKS) provides a ligand contact to ATP. C123 is a [4Fe-4S] cluster binding site. The DEAH box motif lies at 134 to 137 (NNDQ). [4Fe-4S] cluster contacts are provided by C192 and C202. The short motif at 247–250 (DEAH) is the DEAH box element. Residues 514 to 692 (LIKTLPEYLE…PPFKRVIEYS (179 aa)) enclose the Helicase C-terminal domain.

This sequence belongs to the helicase family. DinG subfamily. Type 1 sub-subfamily. [4Fe-4S] cluster is required as a cofactor.

It catalyses the reaction Couples ATP hydrolysis with the unwinding of duplex DNA at the replication fork by translocating in the 5'-3' direction. This creates two antiparallel DNA single strands (ssDNA). The leading ssDNA polymer is the template for DNA polymerase III holoenzyme which synthesizes a continuous strand.. The enzyme catalyses ATP + H2O = ADP + phosphate + H(+). Its function is as follows. DNA-dependent ATPase and 5'-3' DNA helicase. Unwinds D-loops, R-loops, forked DNA and G-quadruplex DNA. This chain is ATP-dependent DNA helicase DinG, found in Photobacterium profundum (strain SS9).